The primary structure comprises 89 residues: Small ribosomal subunit protein uS15 (89 aa).

Belongs to the universal ribosomal protein uS15 family. As to quaternary structure, part of the 30S ribosomal subunit. Forms a bridge to the 50S subunit in the 70S ribosome, contacting the 23S rRNA.

In terms of biological role, one of the primary rRNA binding proteins, it binds directly to 16S rRNA where it helps nucleate assembly of the platform of the 30S subunit by binding and bridging several RNA helices of the 16S rRNA. Functionally, forms an intersubunit bridge (bridge B4) with the 23S rRNA of the 50S subunit in the ribosome. The chain is Small ribosomal subunit protein uS15 from Methylobacterium nodulans (strain LMG 21967 / CNCM I-2342 / ORS 2060).